We begin with the raw amino-acid sequence, 493 residues long: Protein dml1 (493 aa).

It belongs to the misato family.

The protein localises to the mitochondrion. Involved in the partitioning of the mitochondrial organelle and mitochondrial DNA (mtDNA) inheritance. The protein is Protein dml1 (dml1) of Aspergillus oryzae (strain ATCC 42149 / RIB 40) (Yellow koji mold).